Reading from the N-terminus, the 320-residue chain is Aspartate carbamoyltransferase catalytic subunit (320 aa).

Residues Arg-68 and Thr-69 each coordinate carbamoyl phosphate. Lys-96 contacts L-aspartate. 3 residues coordinate carbamoyl phosphate: Arg-118, His-148, and Gln-151. The L-aspartate site is built by Arg-181 and Arg-236. Gly-277 and Pro-278 together coordinate carbamoyl phosphate.

This sequence belongs to the aspartate/ornithine carbamoyltransferase superfamily. ATCase family. In terms of assembly, heterododecamer (2C3:3R2) of six catalytic PyrB chains organized as two trimers (C3), and six regulatory PyrI chains organized as three dimers (R2).

It catalyses the reaction carbamoyl phosphate + L-aspartate = N-carbamoyl-L-aspartate + phosphate + H(+). It functions in the pathway pyrimidine metabolism; UMP biosynthesis via de novo pathway; (S)-dihydroorotate from bicarbonate: step 2/3. In terms of biological role, catalyzes the condensation of carbamoyl phosphate and aspartate to form carbamoyl aspartate and inorganic phosphate, the committed step in the de novo pyrimidine nucleotide biosynthesis pathway. This is Aspartate carbamoyltransferase catalytic subunit from Variovorax paradoxus (strain S110).